Reading from the N-terminus, the 217-residue chain is Ran-binding protein 1 homolog b (217 aa).

Disordered regions lie at residues 1 to 32 (MASI…QVAP) and 160 to 217 (ESEE…VPSA). N-acetylalanine is present on A2. Positions 14 to 26 (DEEETGANEDEDT) are enriched in acidic residues. Positions 29–164 (QVAPIVRLEE…FKEVAESEEE (136 aa)) constitute a RanBD1 domain. The span at 181 to 217 (LTVEEKESEKKPVEKAEENKKSEAVEEKKTEESVPSA) shows a compositional bias: basic and acidic residues.

Interacts with the GTP-bound form of RAN1, RAN2 and RAN3.

It is found in the nucleus. Its subcellular location is the nuclear pore complex. The protein is Ran-binding protein 1 homolog b (RANBP1B) of Arabidopsis thaliana (Mouse-ear cress).